The following is a 348-amino-acid chain: NADH-quinone oxidoreductase subunit H (348 aa).

9 helical membrane passes run 13-33 (LIMV…IAFL), 50-70 (PNVV…KFIL), 82-102 (AVFL…YAVI), 115-135 (VGIL…IMGG), 161-181 (IGLV…TDIV), 198-218 (FLDW…ISGL), 258-278 (AIVL…LPIV), 285-305 (WVPG…MIAL), and 321-341 (LGWK…AFVL).

This sequence belongs to the complex I subunit 1 family. NDH-1 is composed of 14 different subunits. Subunits NuoA, H, J, K, L, M, N constitute the membrane sector of the complex.

It is found in the cell inner membrane. It carries out the reaction a quinone + NADH + 5 H(+)(in) = a quinol + NAD(+) + 4 H(+)(out). Functionally, NDH-1 shuttles electrons from NADH, via FMN and iron-sulfur (Fe-S) centers, to quinones in the respiratory chain. The immediate electron acceptor for the enzyme in this species is believed to be ubiquinone. Couples the redox reaction to proton translocation (for every two electrons transferred, four hydrogen ions are translocated across the cytoplasmic membrane), and thus conserves the redox energy in a proton gradient. This subunit may bind ubiquinone. This Agrobacterium fabrum (strain C58 / ATCC 33970) (Agrobacterium tumefaciens (strain C58)) protein is NADH-quinone oxidoreductase subunit H.